Reading from the N-terminus, the 168-residue chain is DOMON domain-containing protein CBG21753 (168 aa).

The first 17 residues, Met-1 to Ala-17, serve as a signal peptide directing secretion. Residues Ser-25–Gly-143 enclose the DOMON domain. 2 N-linked (GlcNAc...) asparagine glycosylation sites follow: Asn-35 and Asn-94. Residues Gly-148 to Asn-168 form a disordered region. Positions Ser-156–Asn-168 are enriched in basic and acidic residues.

The protein localises to the secreted. The chain is DOMON domain-containing protein CBG21753 from Caenorhabditis briggsae.